A 201-amino-acid polypeptide reads, in one-letter code: Probable thymidylate kinase (201 aa).

An ATP-binding site is contributed by 10–17; it reads GIDGSGKS.

It belongs to the thymidylate kinase family.

It catalyses the reaction dTMP + ATP = dTDP + ADP. This chain is Probable thymidylate kinase, found in Methanococcoides burtonii (strain DSM 6242 / NBRC 107633 / OCM 468 / ACE-M).